Here is a 249-residue protein sequence, read N- to C-terminus: Ribonuclease HII (249 aa).

Residues 30–221 (GPVAGVDEVG…VRRLVMDGEP (192 aa)) form the RNase H type-2 domain. Positions 36, 37, and 130 each coordinate a divalent metal cation.

It belongs to the RNase HII family. Requires Mn(2+) as cofactor. Mg(2+) is required as a cofactor.

The protein resides in the cytoplasm. The catalysed reaction is Endonucleolytic cleavage to 5'-phosphomonoester.. In terms of biological role, endonuclease that specifically degrades the RNA of RNA-DNA hybrids. The sequence is that of Ribonuclease HII from Mycolicibacterium vanbaalenii (strain DSM 7251 / JCM 13017 / BCRC 16820 / KCTC 9966 / NRRL B-24157 / PYR-1) (Mycobacterium vanbaalenii).